Here is a 332-residue protein sequence, read N- to C-terminus: Holliday junction branch migration complex subunit RuvB (332 aa).

Residues 1 to 181 are large ATPase domain (RuvB-L); that stretch reads MSRILDNEIM…FGITGHMEYY (181 aa). ATP-binding positions include L20, R21, G62, K65, T66, T67, 128–130, R171, Y181, and R218; that span reads EDF. Residue T66 participates in Mg(2+) binding. The interval 182 to 252 is small ATPAse domain (RuvB-S); that stretch reads AHAGLTEIVE…ITDKALTMLD (71 aa). The tract at residues 255-332 is head domain (RuvB-H); sequence HEGLDYVDQK…EHLGYEYSEK (78 aa). Residues R291, R310, R312, and R315 each contribute to the DNA site.

Belongs to the RuvB family. Homohexamer. Forms an RuvA(8)-RuvB(12)-Holliday junction (HJ) complex. HJ DNA is sandwiched between 2 RuvA tetramers; dsDNA enters through RuvA and exits via RuvB. An RuvB hexamer assembles on each DNA strand where it exits the tetramer. Each RuvB hexamer is contacted by two RuvA subunits (via domain III) on 2 adjacent RuvB subunits; this complex drives branch migration. In the full resolvosome a probable DNA-RuvA(4)-RuvB(12)-RuvC(2) complex forms which resolves the HJ.

It localises to the cytoplasm. It carries out the reaction ATP + H2O = ADP + phosphate + H(+). In terms of biological role, the RuvA-RuvB-RuvC complex processes Holliday junction (HJ) DNA during genetic recombination and DNA repair, while the RuvA-RuvB complex plays an important role in the rescue of blocked DNA replication forks via replication fork reversal (RFR). RuvA specifically binds to HJ cruciform DNA, conferring on it an open structure. The RuvB hexamer acts as an ATP-dependent pump, pulling dsDNA into and through the RuvAB complex. RuvB forms 2 homohexamers on either side of HJ DNA bound by 1 or 2 RuvA tetramers; 4 subunits per hexamer contact DNA at a time. Coordinated motions by a converter formed by DNA-disengaged RuvB subunits stimulates ATP hydrolysis and nucleotide exchange. Immobilization of the converter enables RuvB to convert the ATP-contained energy into a lever motion, pulling 2 nucleotides of DNA out of the RuvA tetramer per ATP hydrolyzed, thus driving DNA branch migration. The RuvB motors rotate together with the DNA substrate, which together with the progressing nucleotide cycle form the mechanistic basis for DNA recombination by continuous HJ branch migration. Branch migration allows RuvC to scan DNA until it finds its consensus sequence, where it cleaves and resolves cruciform DNA. The chain is Holliday junction branch migration complex subunit RuvB from Streptococcus pneumoniae (strain JJA).